Consider the following 564-residue polypeptide: MKKAKAHHDMAQDEELVFLPLGGVGEIGMNLGLYGYGRPGHRQWIMVDCGVTFPGPELPGVDLVLPDIAFLAEQRRNLKAIIITHAHEDHYGALNDLWPGLNVPVYASPFTAGMLEAKRAFEKSRSEIPITIFKQGDRINVGPFSVEAVGVNHSIPEPMALVIRTQLGTVVHTGDWKIDLEPSLGPLTDESRFRQIGEEGVLALVCDSTNALREGVSPSERQVSESLAKIIADAEGRVGITTFSSNVGRIRSVAEAAEAAGREVLLLGSSMKRVVDVARDVGLMEGVKPFLAEDEFGYIPRDKVVVILTGSQGEPRAALAKIARDEMRNVAFSAGDTIVFSSRTIPGNEKAINDIKNGLIEQGIHIITDSEALVHVSGHPRRTELQQMYQWVKPQILVPVHGEAAHLTAHAELGLQSGIPSVPRLRNGEMLRLAPGPAEVIDEAPHGRIYKDGTLIGDFEEMGIGERRKLSFAGHVSVSVVLDSRYDFLGDPDVVPIGLPEFDDEGEAMEDTLYDAVLGAVESIPRAKRKDLAMLQEAVRRAVRSTTNQVWGKKPVVTVFITKV.

Zn(2+)-binding residues include His-85, His-87, Asp-89, His-90, His-153, and Asp-175. 375-379 contributes to the substrate binding site; the sequence is HVSGH. His-401 serves as a coordination point for Zn(2+).

Belongs to the metallo-beta-lactamase superfamily. RNA-metabolizing metallo-beta-lactamase-like family. Bacterial RNase J subfamily. As to quaternary structure, homodimer, may be a subunit of the RNA degradosome. It depends on Zn(2+) as a cofactor.

The protein localises to the cytoplasm. Its function is as follows. An RNase that has 5'-3' exonuclease and possibly endonuclease activity. Plays a role in 16S and 23S rRNA processing. Might have a role in mRNA maturation and/or decay. The sequence is that of Ribonuclease J from Sinorhizobium meliloti (strain Sm2011 / Rm2011 / 2011).